A 547-amino-acid polypeptide reads, in one-letter code: Chaperonin GroEL (547 aa).

ATP is bound by residues 30-33, K51, 87-91, G415, and D495; these read TLGP and DGTTT. A disordered region spans residues 526 to 547; that stretch reads QDATPTASPDMGGMGGMGGGMM. Over residues 537-547 the composition is skewed to gly residues; the sequence is GGMGGMGGGMM.

The protein belongs to the chaperonin (HSP60) family. As to quaternary structure, forms a cylinder of 14 subunits composed of two heptameric rings stacked back-to-back. Interacts with the co-chaperonin GroES.

The protein resides in the cytoplasm. The enzyme catalyses ATP + H2O + a folded polypeptide = ADP + phosphate + an unfolded polypeptide.. Functionally, together with its co-chaperonin GroES, plays an essential role in assisting protein folding. The GroEL-GroES system forms a nano-cage that allows encapsulation of the non-native substrate proteins and provides a physical environment optimized to promote and accelerate protein folding. The polypeptide is Chaperonin GroEL (Vesicomyosocius okutanii subsp. Calyptogena okutanii (strain HA)).